The primary structure comprises 191 residues: Peptidyl-tRNA hydrolase (191 aa).

Tyr-14 serves as a coordination point for tRNA. His-19 serves as the catalytic Proton acceptor. 3 residues coordinate tRNA: Tyr-64, Asn-66, and Asn-112.

It belongs to the PTH family. As to quaternary structure, monomer.

It localises to the cytoplasm. It catalyses the reaction an N-acyl-L-alpha-aminoacyl-tRNA + H2O = an N-acyl-L-amino acid + a tRNA + H(+). Functionally, hydrolyzes ribosome-free peptidyl-tRNAs (with 1 or more amino acids incorporated), which drop off the ribosome during protein synthesis, or as a result of ribosome stalling. Catalyzes the release of premature peptidyl moieties from peptidyl-tRNA molecules trapped in stalled 50S ribosomal subunits, and thus maintains levels of free tRNAs and 50S ribosomes. In Clostridium botulinum (strain Eklund 17B / Type B), this protein is Peptidyl-tRNA hydrolase.